We begin with the raw amino-acid sequence, 464 residues long: Protein VAPYRIN-LIKE (464 aa).

The MSP domain maps to 3-124; sequence RLVKTEFNEV…RDAVITVILV (122 aa). ANK repeat units lie at residues 153-182, 186-215, 217-246, 252-281, 285-314, 318-347, 349-368, 372-401, and 405-435; these read NLTN…DVNF, NGKS…RIND, VDFV…ELDV, EMMT…NANA, RRWT…VKYA, NGKT…LLQA, RVDD…EVNR, NGWT…EVDS, and AGYT…QTNL.

Expressed in roots.

The protein resides in the cytoplasm. It is found in the nucleus. Its subcellular location is the cell membrane. Its function is as follows. May be involved in arbuscular mycorrhizal (AM) symbiosis with AM fungi and in nitrogen-fixing rhizobial bacteria symbiosis leading to the formation of root nodules. This chain is Protein VAPYRIN-LIKE, found in Medicago truncatula (Barrel medic).